A 256-amino-acid chain; its full sequence is 14-3-3-like protein GF14-C (256 aa).

The protein belongs to the 14-3-3 family. In terms of assembly, may form a complex with the transcriptional activator VP1 and the bZIP transcription factor EMBP1. Expressed in seedlings, internodes and panicles.

It is found in the cytoplasm. It localises to the nucleus. Is associated with a DNA binding complex that binds to the G box, a well-characterized cis-acting DNA regulatory element found in plant genes. This chain is 14-3-3-like protein GF14-C (GF14C), found in Oryza sativa subsp. japonica (Rice).